The sequence spans 169 residues: Photosystem I assembly protein Ycf3 (169 aa).

3 TPR repeats span residues 35–68 (AFSY…EIDP), 72–105 (SYIL…NPAL), and 120–153 (GEQA…APSN).

Belongs to the Ycf3 family.

The protein resides in the plastid. It is found in the chloroplast thylakoid membrane. In terms of biological role, essential for the assembly of the photosystem I (PSI) complex. May act as a chaperone-like factor to guide the assembly of the PSI subunits. The chain is Photosystem I assembly protein Ycf3 from Chaetosphaeridium globosum (Charophycean green alga).